A 651-amino-acid polypeptide reads, in one-letter code: Cylicin-1 (651 aa).

Disordered stretches follow at residues 110–241 (LKKA…CSEN) and 267–615 (NYSQ…CEPS). 2 stretches are compositionally biased toward basic and acidic residues: residues 111 to 129 (KKAE…PLKK) and 146 to 173 (QIVE…EQSK). Positions 186 to 195 (QNSKTVSKNC) are enriched in polar residues. Positions 196–205 (SQKDKKDSKN) are enriched in basic and acidic residues. Polar residues predominate over residues 230–241 (SNDPISEICSEN). Residues 271 to 281 (NNSKNYSLKYT) are compositionally biased toward low complexity. 8 consecutive repeat copies span residues 278–305 (LKYT…DSKD), 306–342 (AKKD…DSKD), 343–379 (ERKD…DAKD), 380–417 (ARND…ESKE), 418–453 (SQKD…PKGD), 454–491 (SKKG…SDLE), 492–531 (LKKD…SKTG), and 532–553 (FKTS…YKPG). 6 stretches are compositionally biased toward basic and acidic residues: residues 284 to 308 (TKKD…DAKK), 318 to 331 (KKDD…KDTE), 338 to 368 (GDSK…KYPE), 375 to 402 (GDAK…DAKK), 413 to 441 (LESK…KNDE), and 448 to 482 (SEPK…KNAE). Residues 495 to 505 (DKKHSKEKKGS) are compositionally biased toward basic residues. Residues 506–518 (KKDIKKDARKDTE) are compositionally biased toward basic and acidic residues. Positions 529–538 (KTGFKTSTKI) are enriched in polar residues. The tract at residues 532–553 (FKTSTKIKGSDTESEESLYKPG) is 8 X approximate tandem repeats. The segment covering 587–607 (TFNEKGEKASTGRVPPSREKP) has biased composition (basic and acidic residues).

As to quaternary structure, interacts with proteins of spermatozoa head including ACTL7A, CCIN, FAM209A and SPACA1; the interactions may be necessary for proper acrosome attachment to the nuclear envelope. As to expression, testis.

It is found in the cytoplasm. It localises to the cytoskeleton. The protein localises to the perinuclear theca. The protein resides in the calyx. Functionally, plays a role in the establishment of normal sperm morphology during spermatogenesis and is required for acrosome attachment to the nuclear envelope. This is Cylicin-1 (CYLC1) from Homo sapiens (Human).